Consider the following 127-residue polypeptide: MSIPAELKYSKTHEWIRIEGDEAVIGITHFAQEQLGDLTFVDLPGVGDTLDVEQEMGSVESVKAASELYAPVAGEVIAVNDALASAPELVNQSPYTEGWMLRVKLAATPEDLLDATAYGELVASEAH.

The Lipoyl-binding domain occupies 22–104 (EAVIGITHFA…YTEGWMLRVK (83 aa)). N6-lipoyllysine is present on lysine 63.

This sequence belongs to the GcvH family. As to quaternary structure, the glycine cleavage system is composed of four proteins: P, T, L and H. It depends on (R)-lipoate as a cofactor.

In terms of biological role, the glycine cleavage system catalyzes the degradation of glycine. The H protein shuttles the methylamine group of glycine from the P protein to the T protein. The chain is Glycine cleavage system H protein from Nitratidesulfovibrio vulgaris (strain DP4) (Desulfovibrio vulgaris).